The chain runs to 229 residues: Large ribosomal subunit protein uL1 (229 aa).

It belongs to the universal ribosomal protein uL1 family. As to quaternary structure, part of the 50S ribosomal subunit.

In terms of biological role, binds directly to 23S rRNA. The L1 stalk is quite mobile in the ribosome, and is involved in E site tRNA release. Its function is as follows. Protein L1 is also a translational repressor protein, it controls the translation of the L11 operon by binding to its mRNA. This is Large ribosomal subunit protein uL1 from Clostridium botulinum (strain Alaska E43 / Type E3).